The chain runs to 404 residues: Nuclear receptor subfamily 2 group F member 6 (404 aa).

Residues 1 to 15 are compositionally biased toward gly residues; that stretch reads MAMVTGGWGGPGGDT. The disordered stretch occupies residues 1 to 49; it reads MAMVTGGWGGPGGDTNGVDKAGGYPRAAEDDSASPPGAASDAEPGDEER. Low complexity predominate over residues 33 to 42; sequence ASPPGAASDA. Residues Ser-34 and Ser-40 each carry the phosphoserine modification. The segment at residues 53 to 128 is a DNA-binding region (nuclear receptor); the sequence is QVDCVVCGDK…VGMRKEAVQR (76 aa). The NR C4-type zinc-finger motif lies at 56 to 76; it reads CVVCGDKSSGKHYGVFTCEGC. The residue at position 83 (Ser-83) is a Phosphoserine. An NR C4-type zinc finger spans residues 92-116; that stretch reads CRSNRDCQIDQHHRNQCQYCRLKKC. In terms of domain architecture, NR LBD spans 165-393; that stretch reads PVSELIAQLL…TLIRDMLLSG (229 aa). The segment at 327–404 is important for dimerization; it reads LQEKAQVALT…TFNWPYGSGQ (78 aa).

This sequence belongs to the nuclear hormone receptor family. NR2 subfamily. Binds DNA as dimer; homodimer and heterodimer with NR2F2 and probably NR2F1. Interacts with THRB. Expressed in heart, placenta, liver, skeletal muscle, kidney and pancreas.

It is found in the nucleus. Transcription factor predominantly involved in transcriptional repression. Binds to promoter/enhancer response elements that contain the imperfect 5'-AGGTCA-3' direct or inverted repeats with various spacings which are also recognized by other nuclear hormone receptors. Involved in modulation of hormonal responses. Represses transcriptional activity of the lutropin-choriogonadotropic hormone receptor/LHCGR gene, the renin/REN gene and the oxytocin-neurophysin/OXT gene. Represses the triiodothyronine-dependent and -independent transcriptional activity of the thyroid hormone receptor gene in a cell type-specific manner. The corepressing function towards thyroid hormone receptor beta/THRB involves at least in part the inhibition of THRB binding to triiodothyronine response elements (TREs) by NR2F6. Inhibits NFATC transcription factor DNA binding and subsequently its transcriptional activity. Acts as transcriptional repressor of IL-17 expression in Th-17 differentiated CD4(+) T cells and may be involved in induction and/or maintenance of peripheral immunological tolerance and autoimmunity. Involved in development of forebrain circadian clock; is required early in the development of the locus coeruleus (LC). The sequence is that of Nuclear receptor subfamily 2 group F member 6 (NR2F6) from Homo sapiens (Human).